A 160-amino-acid polypeptide reads, in one-letter code: Large ribosomal subunit protein eL21 (160 aa).

Basic and acidic residues-rich tracts occupy residues 112–123 and 136–145; these read NDQKKKEAKEKG and REAHFVRTNG. The disordered stretch occupies residues 112–145; sequence NDQKKKEAKEKGTWVQLKRQPAPPREAHFVRTNG.

It belongs to the eukaryotic ribosomal protein eL21 family. In terms of assembly, component of the large ribosomal subunit.

Its subcellular location is the cytoplasm. The protein localises to the cytosol. It localises to the endoplasmic reticulum. In terms of biological role, component of the large ribosomal subunit. The ribosome is a large ribonucleoprotein complex responsible for the synthesis of proteins in the cell. The polypeptide is Large ribosomal subunit protein eL21 (Mus musculus (Mouse)).